The sequence spans 767 residues: MALSHSLGFPRIGRDRELKKALEAHWKGELDEAGLRAVGQRLRAEHWQLQKDAGIDLLPVGDFAWYDQVLAHSLAFDVIPERFRPAAGKPTLDTLFAMARGAVANKSGGSCCGGAHAQEMTKWFDTNYHYLVPEFSADQQFALSWEQLFEEVAEAHALGHSVKPVLIGPLTYLWLGKEKGSDFDRLDLLERLLPVYGEIFQRLAAQGVEWVQIDEPILVLDLPQAWKNAFERAYNLIQREPCKKLIATYFGGLEDNLGLAANLPVDGLHIDLVRAPEQYPTILDRLPAYKVLSLGMVNGRNVWRCDLEKVLELLRHAHERLGERLWVAPSCSLLHSPVDLEREDQLDAELKSWLAFAVQKCQEVALLGRALEAPDDASVQAALEQSRVVRAARAASTRIHKPEVQARLAAIRPRHAQRQSPFAERIAQQRECLQLPLLPTTTIGSFPQTSAIRLARQSFKQGKLSAAEYTEAMHAEIRHAVEVQENLGLDVLVHGEAERNDMVEYFAEQLDGYAFTRFGWVQSYGSRCVKPAVIVGDLGRPQAMTVEWIKYAQGLTDKPMKGMLTGPVTMLMWSFPREDVSREVQARQLALAIRDEVVDLEAAGIRIIQIDEAAFREGLPLRQAAWQGYLDWATEAFRLAASGVRDETQIHTHMCYSEFNDVIESIAAMDADVITIETSRSDMELLEAFERFAYPNEIGPGVYDIHSPRVPDSAEMAGLLRKAARRIPLERLWVNPDCGLKTRAWPETEAALVNMVAAARQLRAELA.

Residues 16 to 19 (RELK) and K122 each bind 5-methyltetrahydropteroyltri-L-glutamate. L-homocysteine is bound by residues 443-445 (IGS) and E496. L-methionine contacts are provided by residues 443–445 (IGS) and E496. 5-methyltetrahydropteroyltri-L-glutamate-binding positions include 527–528 (RC) and W573. D611 provides a ligand contact to L-homocysteine. D611 is an L-methionine binding site. E617 provides a ligand contact to 5-methyltetrahydropteroyltri-L-glutamate. Zn(2+) contacts are provided by H653, C655, and E677. H706 functions as the Proton donor in the catalytic mechanism. C738 is a binding site for Zn(2+).

It belongs to the vitamin-B12 independent methionine synthase family. The cofactor is Zn(2+).

The enzyme catalyses 5-methyltetrahydropteroyltri-L-glutamate + L-homocysteine = tetrahydropteroyltri-L-glutamate + L-methionine. It functions in the pathway amino-acid biosynthesis; L-methionine biosynthesis via de novo pathway; L-methionine from L-homocysteine (MetE route): step 1/1. Its function is as follows. Catalyzes the transfer of a methyl group from 5-methyltetrahydrofolate to homocysteine resulting in methionine formation. The sequence is that of 5-methyltetrahydropteroyltriglutamate--homocysteine methyltransferase from Ectopseudomonas mendocina (strain ymp) (Pseudomonas mendocina).